The sequence spans 414 residues: Arrestin domain-containing protein 3 (414 aa).

Short sequence motifs (PPxY motif) lie at residues 346 to 349 (PPSY) and 391 to 394 (PPLY). The interval 393–414 (LYSEIDPNPDQSADDRPSCPSR) is disordered. Residues 405–414 (ADDRPSCPSR) show a composition bias toward basic and acidic residues.

The protein belongs to the arrestin family. In terms of assembly, interacts (via PPxY motifs) with NEDD4 (via WW domains). Interacts with ADRB2. Interacts with ADRB3. Interacts with HGS (via PPxY motifs). Does not bind TXN (thioredoxin). Interacts with ITCH. Interacts with WWP1 (via WW domains). In terms of tissue distribution, highly expressed in skeletal muscle, placenta, kidney, lung, liver, blood, adrenal gland, lymph node, mammary gland, thyroid, and trachea. Very low levels in colon, thymus, spleen, small intestine, bladder and bone marrow. Strong expression in differentiated adipocytes compared to preadipocytes. Detected in omental fat and subcutaneous fat tissue.

The protein resides in the cytoplasm. It is found in the cell membrane. It localises to the lysosome. Its subcellular location is the endosome. The protein localises to the early endosome. Its function is as follows. Adapter protein that plays a role in regulating cell-surface expression of adrenergic receptors and probably also other G protein-coupled receptors. Plays a role in NEDD4-mediated ubiquitination and endocytosis af activated ADRB2 and subsequent ADRB2 degradation. May recruit NEDD4 to ADRB2. Alternatively, may function as adapter protein that does not play a major role in recruiting NEDD4 to ADRB2, but rather plays a role in a targeting ADRB2 to endosomes. This Homo sapiens (Human) protein is Arrestin domain-containing protein 3 (ARRDC3).